Here is a 273-residue protein sequence, read N- to C-terminus: L-fucose dehydrogenase (273 aa).

The NAD(+) site is built by Arg19, Ile21, Asp40, Lys41, Asp62, Val63, Asn89, Tyr154, Lys158, Ile187, Thr189, and Leu191. Tyr154 acts as the Proton acceptor in catalysis.

It belongs to the short-chain dehydrogenases/reductases (SDR) family. As to quaternary structure, homotetramer.

The protein resides in the cytoplasm. It carries out the reaction L-fucose + NAD(+) = L-fucono-1,5-lactone + NADH + H(+). The enzyme catalyses D-arabinose + NAD(+) = D-arabinono-1,5-lactone + NADH + H(+). The catalysed reaction is L-galactose + NAD(+) = L-galactono-1,5-lactone + NADH + H(+). The protein operates within carbohydrate degradation; L-fucose degradation. Its function is as follows. Catalyzes the NAD(+)-dependent oxidation of L-fucose, yielding L-fucono-1,5-lactone, which rapidly converts spontaneously to L-fucone-1,4-lactone. Can also act on D-arabinose and L-galactose, with lower catalytic efficiency. Does not use NADPH. May be the initial enzyme of the putative L-fucose degradation pathway in mammals. This chain is L-fucose dehydrogenase, found in Mus musculus (Mouse).